Reading from the N-terminus, the 147-residue chain is Cytochrome c-type biogenesis protein CcmE (147 aa).

The Cytoplasmic segment spans residues 1-9 (MKNLKKQRR). The helical; Signal-anchor for type II membrane protein transmembrane segment at 10–30 (IQVIALATVALVLSTALIGYA) threads the bilayer. Residues 31 to 147 (MRDGINFFRA…EQGVYKGTEG (117 aa)) lie on the Periplasmic side of the membrane. Heme is bound by residues H123 and Y127.

It belongs to the CcmE/CycJ family.

Its subcellular location is the cell inner membrane. Functionally, heme chaperone required for the biogenesis of c-type cytochromes. Transiently binds heme delivered by CcmC and transfers the heme to apo-cytochromes in a process facilitated by CcmF and CcmH. This Roseobacter denitrificans (strain ATCC 33942 / OCh 114) (Erythrobacter sp. (strain OCh 114)) protein is Cytochrome c-type biogenesis protein CcmE.